The chain runs to 229 residues: Transcriptional regulatory protein CreB (229 aa).

The Response regulatory domain maps to 5–119; it reads TVWLVEDEQG…EVCARVRTLL (115 aa). Asp54 carries the 4-aspartylphosphate modification. A DNA-binding region (ompR/PhoB-type) is located at residues 129–228; the sequence is SPVIRIGHFE…HRGMGYSLRG (100 aa).

In terms of processing, phosphorylated by CreC.

It is found in the cytoplasm. Its function is as follows. Member of the two-component regulatory system CreC/CreB involved in catabolic regulation. The protein is Transcriptional regulatory protein CreB (creB) of Escherichia coli (strain K12).